The chain runs to 410 residues: Angiopoietin-related protein 4 (410 aa).

Positions 1-23 (MRCAPTAGAALVLCAATAGLLSA) are cleaved as a signal peptide. The tract at residues 79–101 (ACQGPKGKDAPFKDSEDRVPEGQ) is disordered. Residues 84-98 (KGKDAPFKDSEDRVP) are compositionally biased toward basic and acidic residues. The stretch at 104–152 (ETLQSLQTQLKAQNSKIQQLFQKVAQQQRYLSKQNLRIQNLQSQIDLLA) forms a coiled coil. Residue Asn181 is glycosylated (N-linked (GlcNAc...) asparagine). Residues 183–405 (THLHRPPRDC…ATTLLIQPME (223 aa)) enclose the Fibrinogen C-terminal domain. An intrachain disulfide couples Cys192 to Cys220. N-linked (GlcNAc...) asparagine glycans are attached at residues Asn236 and Asn242. Residues Cys345 and Cys358 are joined by a disulfide bond.

In terms of assembly, homooligomer; disulfide-linked via Cys residues in the N-terminal part of the protein. The homooligomer undergoes proteolytic processing to release the ANGPTL4 C-terminal chain, which circulates as a monomer. The homooligomer unprocessed form is able to interact with the extracellular matrix. In terms of processing, N-glycosylated. Post-translationally, forms disulfide-linked dimers and tetramers. Cleaved into a smaller N-terminal chain and a larger chain that contains the fibrinogen C-terminal domain; both cleaved and uncleaved forms are detected in the extracellular space. The cleaved form is not present within the cell. As to expression, detected in liver and kidney. Predominantly expressed in adipose tissue and is strongly up-regulated by fasting in white adipose tissue and liver. More abundant in areas of lower flow stress in the inner curvature compared to the outer curvature regions of the aorta (at protein level).

It localises to the secreted. The protein resides in the extracellular space. It is found in the extracellular matrix. Mediates inactivation of the lipoprotein lipase LPL, and thereby plays a role in the regulation of triglyceride clearance from the blood serum and in lipid metabolism. May also play a role in regulating glucose homeostasis and insulin sensitivity. Inhibits proliferation, migration, and tubule formation of endothelial cells and reduces vascular leakage. Upon heterologous expression, inhibits the adhesion of endothelial cell to the extracellular matrix (ECM), and inhibits the reorganization of the actin cytoskeleton, formation of actin stress fibers and focal adhesions in endothelial cells that have adhered to ANGPTL4-containing ECM (in vitro). Depending on context, may modulate tumor-related angiogenesis. Functionally, mediates inactivation of the lipoprotein lipase LPL, and thereby plays an important role in the regulation of triglyceride clearance from the blood serum and in lipid metabolism. Has higher activity in LPL inactivation than the uncleaved protein. This Mus musculus (Mouse) protein is Angiopoietin-related protein 4 (Angptl4).